A 66-amino-acid polypeptide reads, in one-letter code: MLKKFRDLTLEDIKAKRLSLKKEYMDLRFKAVVGHVENPLKKRELRRDIARLNTIVHEYEIGIRKV.

This sequence belongs to the universal ribosomal protein uL29 family.

In Borrelia turicatae (strain 91E135), this protein is Large ribosomal subunit protein uL29.